We begin with the raw amino-acid sequence, 442 residues long: NAD kinase 2, mitochondrial (442 aa).

Residues 1 to 62 constitute a mitochondrion transit peptide; that stretch reads MTCYRGFLLG…RELAGCGSRA (62 aa). The segment covering 24-36 has biased composition (low complexity); that stretch reads RGPGAGGPAARPR. A disordered region spans residues 24–60; sequence RGPGAGGPAARPRLGGDGGGRRHLGQGQPRELAGCGS. Lysine 76 is modified (N6-acetyllysine; alternate). Lysine 76 bears the N6-succinyllysine; alternate mark. Serine 188 is subject to Phosphoserine. Lysine 302 carries the N6-succinyllysine modification. The residue at position 317 (lysine 317) is an N6-acetyllysine; alternate. N6-succinyllysine; alternate is present on lysine 317. Serine 367 carries the post-translational modification Phosphoserine. Lysine 397 bears the N6-acetyllysine mark.

Belongs to the NAD kinase family. Homodimer. Widely expressed.

It localises to the mitochondrion. It carries out the reaction NAD(+) + ATP = ADP + NADP(+) + H(+). With respect to regulation, inhibited by NADH, NADPH and NADP(+). Its function is as follows. Mitochondrial NAD(+) kinase that phosphorylates NAD(+) to yield NADP(+). Can use both ATP or inorganic polyphosphate as the phosphoryl donor. Also has weak NADH kinase activity in vitro; however NADH kinase activity is much weaker than the NAD(+) kinase activity and may not be relevant in vivo. The sequence is that of NAD kinase 2, mitochondrial (NADK2) from Homo sapiens (Human).